Reading from the N-terminus, the 132-residue chain is UPF0060 membrane protein SG1469 (132 aa).

3 helical membrane-spanning segments follow: residues V5–Y25, L32–P52, and A60–I80.

It belongs to the UPF0060 family.

It localises to the cell inner membrane. This chain is UPF0060 membrane protein SG1469, found in Sodalis glossinidius (strain morsitans).